Here is a 306-residue protein sequence, read N- to C-terminus: Ribosomal protein L11 methyltransferase (306 aa).

Residues Thr154, Gly179, Asp201, and Asn242 each coordinate S-adenosyl-L-methionine.

Belongs to the methyltransferase superfamily. PrmA family.

Its subcellular location is the cytoplasm. It carries out the reaction L-lysyl-[protein] + 3 S-adenosyl-L-methionine = N(6),N(6),N(6)-trimethyl-L-lysyl-[protein] + 3 S-adenosyl-L-homocysteine + 3 H(+). Methylates ribosomal protein L11. The sequence is that of Ribosomal protein L11 methyltransferase from Xylella fastidiosa (strain 9a5c).